Reading from the N-terminus, the 145-residue chain is Putative antiporter subunit mnhG2 (145 aa).

The next 3 helical transmembrane spans lie at 11–31 (IAAV…IGIV), 51–71 (VLLT…FFSV), and 72–92 (RLLL…HLVA).

Belongs to the CPA3 antiporters (TC 2.A.63) subunit G family. As to quaternary structure, may form a heterooligomeric complex that consists of seven subunits: mnhA2, mnhB2, mnhC2, mnhD2, mnhE2, mnhF2 and mnhG2.

The protein resides in the cell membrane. This Staphylococcus aureus (strain JH9) protein is Putative antiporter subunit mnhG2 (mnhG2).